Reading from the N-terminus, the 319-residue chain is MTNSIPWIEKYRPVNIDDVIIDDNISKQINIFLQDRENVHLIITGSPGVGKTSTVRCIAKELLGEDMSQGYLEINAAEDRGVRSISTIIPPFCKKVFAANKSKIILLDEADIMTSKCQYDINNMIKKFGRKTKFIFTCNDSSKIIEDIQSICRILRFKKLTDEQINQYLSKICVNEKIPYDEQGLRTICYISNGDMRKSINDLQKTAFTFEKITKNLVLKICKVPDPEDIRKIISLCLESNLEKADEIMNNIIKLDYCYFDIVTSFIYVLKVYDMSENLRLRLIMIVNETKINISKGLRSKLQLTGMICRLIKEIQRDE.

45-52 contacts ATP; that stretch reads GSPGVGKT.

Belongs to the activator 1 small subunits family. RfcS subfamily.

Its function is as follows. Part of the RFC clamp loader complex which loads the PCNA sliding clamp onto DNA. The protein is Putative replication factor C small subunit R395 of Acanthamoeba polyphaga mimivirus (APMV).